The following is a 263-amino-acid chain: Hydroxyethylthiazole kinase (263 aa).

Position 41 (Met41) interacts with substrate. Positions 117 and 163 each coordinate ATP. Residue Gly190 participates in substrate binding.

This sequence belongs to the Thz kinase family. Mg(2+) serves as cofactor.

The enzyme catalyses 5-(2-hydroxyethyl)-4-methylthiazole + ATP = 4-methyl-5-(2-phosphooxyethyl)-thiazole + ADP + H(+). The protein operates within cofactor biosynthesis; thiamine diphosphate biosynthesis; 4-methyl-5-(2-phosphoethyl)-thiazole from 5-(2-hydroxyethyl)-4-methylthiazole: step 1/1. Its function is as follows. Catalyzes the phosphorylation of the hydroxyl group of 4-methyl-5-beta-hydroxyethylthiazole (THZ). The polypeptide is Hydroxyethylthiazole kinase (Thermoanaerobacter sp. (strain X514)).